The primary structure comprises 286 residues: Probable 4-deoxy-4-formamido-L-arabinose-phosphoundecaprenol deformylase ArnD (286 aa).

The NodB homology domain occupies 1-248 (MGTKLGVPNL…IAINEGINFC (248 aa)).

The protein belongs to the polysaccharide deacetylase family. ArnD deformylase subfamily.

It catalyses the reaction 4-deoxy-4-formamido-alpha-L-arabinopyranosyl di-trans,octa-cis-undecaprenyl phosphate + H2O = 4-amino-4-deoxy-alpha-L-arabinopyranosyl di-trans,octa-cis-undecaprenyl phosphate + formate. It functions in the pathway glycolipid biosynthesis; 4-amino-4-deoxy-alpha-L-arabinose undecaprenyl phosphate biosynthesis; 4-amino-4-deoxy-alpha-L-arabinose undecaprenyl phosphate from UDP-4-deoxy-4-formamido-beta-L-arabinose and undecaprenyl phosphate: step 2/2. The protein operates within bacterial outer membrane biogenesis; lipopolysaccharide biosynthesis. Catalyzes the deformylation of 4-deoxy-4-formamido-L-arabinose-phosphoundecaprenol to 4-amino-4-deoxy-L-arabinose-phosphoundecaprenol. The modified arabinose is attached to lipid A and is required for resistance to polymyxin and cationic antimicrobial peptides. In Wigglesworthia glossinidia brevipalpis, this protein is Probable 4-deoxy-4-formamido-L-arabinose-phosphoundecaprenol deformylase ArnD.